The following is a 156-amino-acid chain: Transcription factor MafF (156 aa).

The segment at 51–76 (RLKQRRRTLKNRGYAASCRVKRVCQK) is basic motif. Positions 51-114 (RLKQRRRTLK…DALRGKCEAL (64 aa)) constitute a bZIP domain. Residues 79 to 93 (LQKQKSELEREVDKL) form a leucine-zipper region.

The protein belongs to the bZIP family. Maf subfamily. In terms of assembly, monomer and homo- or heterodimer. Interacts with MIP. Forms high affinity heterodimers with members of the CNC-bZIP family such as NFE2L1/NRF1. Highly expressed in the lung, lower expression in the brain, thymus, liver, spleen, intestine, kidney, heart, muscle, and ovary. Not significantly expressed in hematopoietic cells.

It is found in the nucleus. In terms of biological role, since they lack a putative transactivation domain, the small Mafs behave as transcriptional repressors when they dimerize among themselves. However, they seem to serve as transcriptional activators by dimerizing with other (usually larger) basic-zipper proteins, such as NFE2L1/NRF1, and recruiting them to specific DNA-binding sites. Interacts with the upstream promoter region of the oxytocin receptor gene. May be a transcriptional enhancer in the up-regulation of the oxytocin receptor gene at parturition. In Mus musculus (Mouse), this protein is Transcription factor MafF (Maff).